The chain runs to 930 residues: Semaphorin-6C (930 aa).

The signal sequence occupies residues 1–24; that stretch reads MPRAPHFMPLLLLLLLLSLPHTQA. The Extracellular segment spans residues 25 to 604; it reads AFPQDPLPLL…ASASRSVPIP (580 aa). Positions 30 to 516 constitute a Sema domain; the sequence is PLPLLISDLQ…FSGCIVYLPL (487 aa). Asparagine 70 carries N-linked (GlcNAc...) asparagine glycosylation. 4 disulfide bridges follow: cysteine 111-cysteine 121, cysteine 139-cysteine 148, cysteine 262-cysteine 373, and cysteine 287-cysteine 332. Residue asparagine 286 is glycosylated (N-linked (GlcNAc...) asparagine). Residue asparagine 437 is glycosylated (N-linked (GlcNAc...) asparagine). 4 disulfide bridges follow: cysteine 479–cysteine 510, cysteine 519–cysteine 537, cysteine 525–cysteine 570, and cysteine 529–cysteine 545. Residues 554–593 form a disordered region; that stretch reads TDVDQAGNQESMEHGDCQDGATGSQSGPGDSAYGVRRDLP. The helical transmembrane segment at 605–625 threads the bilayer; the sequence is LLLASVAAAFALGASVSGLLV. Topologically, residues 626-930 are cytoplasmic; sequence SCACRRAHRR…AVPNGGRFNF (305 aa). Disordered stretches follow at residues 654–674, 716–761, 775–882, and 908–930; these read LARL…GDAV, GDPW…PGQA, HGPQ…PGKH, and SLKP…RFNF. Residues 829–844 show a composition bias toward low complexity; that stretch reads ASAPARPALSAPAPRL.

Belongs to the semaphorin family. In adult tissues, expressed only in skeletal muscle.

The protein localises to the cell membrane. Its function is as follows. Shows growth cone collapsing activity on dorsal root ganglion (DRG) neurons in vitro. May be a stop signal for the DRG neurons in their target areas, and possibly also for other neurons. May also be involved in the maintenance and remodeling of neuronal connections. This Homo sapiens (Human) protein is Semaphorin-6C (SEMA6C).